The primary structure comprises 660 residues: Bifunctional polymyxin resistance protein ArnA (660 aa).

Residues 1–304 (MKTVVFAYHD…TLGLVQGSRL (304 aa)) form a formyltransferase ArnAFT region. Position 86-88 (86-88 (HLI)) interacts with (6R)-10-formyltetrahydrofolate. Histidine 104 acts as the Proton donor; for formyltransferase activity in catalysis. (6R)-10-formyltetrahydrofolate contacts are provided by residues arginine 114 and 136–140 (VKRAD). Positions 314 to 660 (RRTRVLILGV…RTVDLTDKPS (347 aa)) are dehydrogenase ArnADH. NAD(+)-binding positions include aspartate 347 and 368–369 (DI). Residues alanine 393, tyrosine 398, and 432-433 (TS) contribute to the UDP-alpha-D-glucuronate site. Glutamate 434 functions as the Proton acceptor; for decarboxylase activity in the catalytic mechanism. Residues arginine 460, asparagine 492, 526–535 (KLIDGGKQKR), and tyrosine 613 each bind UDP-alpha-D-glucuronate. Arginine 619 functions as the Proton donor; for decarboxylase activity in the catalytic mechanism.

It in the N-terminal section; belongs to the Fmt family. UDP-L-Ara4N formyltransferase subfamily. The protein in the C-terminal section; belongs to the NAD(P)-dependent epimerase/dehydratase family. UDP-glucuronic acid decarboxylase subfamily. In terms of assembly, homohexamer, formed by a dimer of trimers.

It catalyses the reaction UDP-alpha-D-glucuronate + NAD(+) = UDP-beta-L-threo-pentopyranos-4-ulose + CO2 + NADH. The catalysed reaction is UDP-4-amino-4-deoxy-beta-L-arabinose + (6R)-10-formyltetrahydrofolate = UDP-4-deoxy-4-formamido-beta-L-arabinose + (6S)-5,6,7,8-tetrahydrofolate + H(+). Its pathway is nucleotide-sugar biosynthesis; UDP-4-deoxy-4-formamido-beta-L-arabinose biosynthesis; UDP-4-deoxy-4-formamido-beta-L-arabinose from UDP-alpha-D-glucuronate: step 1/3. It functions in the pathway nucleotide-sugar biosynthesis; UDP-4-deoxy-4-formamido-beta-L-arabinose biosynthesis; UDP-4-deoxy-4-formamido-beta-L-arabinose from UDP-alpha-D-glucuronate: step 3/3. The protein operates within bacterial outer membrane biogenesis; lipopolysaccharide biosynthesis. Bifunctional enzyme that catalyzes the oxidative decarboxylation of UDP-glucuronic acid (UDP-GlcUA) to UDP-4-keto-arabinose (UDP-Ara4O) and the addition of a formyl group to UDP-4-amino-4-deoxy-L-arabinose (UDP-L-Ara4N) to form UDP-L-4-formamido-arabinose (UDP-L-Ara4FN). The modified arabinose is attached to lipid A and is required for resistance to polymyxin and cationic antimicrobial peptides. The sequence is that of Bifunctional polymyxin resistance protein ArnA from Escherichia coli (strain SE11).